Here is a 107-residue protein sequence, read N- to C-terminus: Integration host factor subunit beta (107 aa).

The disordered stretch occupies residues 78-107; that stretch reads PHFKPGKELRERVDGRAGEPLKADEPDDER. Residues 82–101 are compositionally biased toward basic and acidic residues; sequence PGKELRERVDGRAGEPLKAD.

It belongs to the bacterial histone-like protein family. Heterodimer of an alpha and a beta chain.

Its function is as follows. This protein is one of the two subunits of integration host factor, a specific DNA-binding protein that functions in genetic recombination as well as in transcriptional and translational control. This is Integration host factor subunit beta from Burkholderia multivorans (strain ATCC 17616 / 249).